We begin with the raw amino-acid sequence, 792 residues long: MPQAAYCYMRVVGRGSYGEVTLVKHRRDGKQYVIKKLNLRNASSRERRAAEQEAQLLSQLKHPNIVTYKESWEGGDGLLYIVMGFCEGGDLYRKLKEQKGQLLPESQVVEWFVQIAMALQYLHEKHILHRDLKTQNVFLTRTNIIKVGDLGIARVLENHGDMASTLIGTPYYMSPELFSNKPYNYKSDVWALGCCVYEMATLKHAFNAKDMNSLVYRIIEGKLPPMPKVYSTELAELIRTMLSRRPEERPSVRSILRQPYIKHHISLFLEATKAKTSKNNVKNCDSRAKPVAAVVSRKEESNTDVIHYQPRSSEGSALHVMGEDKCLSQEKPVDIGPLRSPASLEGHTGKQDMNNTGESCATISRINIDILPAERRDSANAGVVQESQPQHVDAADEVDSQCSISQEKERLQGNTKSSDQPGNLLPRRSSDGGDGEGSELVKPLYPSNKDQKPDQDQVTGIIENQDSIHPRSQPHSSMSEPSLSRQRRQKKREQTAHSGTKSQFQELPPRLLPSYPGIGKVDIIATQQNDGNQGGPVAGCVNSSRTSSTASAKDRPLSARERRRLKQSQEEMLPSGPAVQRTPSAVEPLKPQEEDQPIPAQRFSSDCSITQMNHTLPREKEKRLMHGLSEDELSSSTSSTDKSDGDSREGKSHTNEMKDLVQLMTQTLRLEAKESCEDLQVLNPGSEFRLHRKYRDTLVLHGKVAEEVEPHCTELPTGIIPGSEKIRRIVEVLRADVIQGLGIQLLEQVFDLLGEEDELEREARLQEHMGDKYTTYCVKARQLKFFEENVSF.

In terms of domain architecture, Protein kinase spans 6-261; it reads YCYMRVVGRG…VRSILRQPYI (256 aa). ATP is bound by residues 12–20 and lysine 35; that span reads VGRGSYGEV. Catalysis depends on aspartate 131, which acts as the Proton acceptor. Threonine 165 carries the post-translational modification Phosphothreonine; by autocatalysis. 4 disordered regions span residues 329-358, 379-515, 527-611, and 628-657; these read QEKPVDIGPLRSPASLEGHTGKQDMNNTGE, ANAG…LPSY, QQND…SITQ, and LSEDELSSSTSSTDKSDGDSREGKSHTNEM. 2 positions are modified to phosphoserine: serine 340 and serine 343. Polar residues-rich tracts occupy residues 412–421, 456–467, 473–484, 496–505, and 541–551; these read QGNTKSSDQP, DQVTGIIENQDS, QPHSSMSEPSLS, AHSGTKSQFQ, and VNSSRTSSTAS. At lysine 566 the chain carries N6-methyllysine. Polar residues predominate over residues 602-611; sequence RFSSDCSITQ. Basic and acidic residues predominate over residues 641 to 657; that stretch reads DKSDGDSREGKSHTNEM. Serine 675 carries the phosphoserine modification.

It belongs to the protein kinase superfamily. NEK Ser/Thr protein kinase family. NIMA subfamily. Requires Mn(2+) as cofactor. In terms of tissue distribution, expressed ubiquitously among various organs and is up-regulated in the testis.

Its subcellular location is the cytoplasm. The protein localises to the cell projection. The protein resides in the cilium. The enzyme catalyses L-seryl-[protein] + ATP = O-phospho-L-seryl-[protein] + ADP + H(+). It carries out the reaction L-threonyl-[protein] + ATP = O-phospho-L-threonyl-[protein] + ADP + H(+). In terms of biological role, required for normal entry into proliferative arrest after a limited number of cell divisions, also called replicative senescence. Required for normal cell cycle arrest in response to double-stranded DNA damage. Protein kinase that seems to act exclusively upon threonine residues. The protein is Serine/threonine-protein kinase Nek4 (Nek4) of Mus musculus (Mouse).